Here is a 247-residue protein sequence, read N- to C-terminus: LHFPL tetraspan subfamily member 4 protein (247 aa).

4 helical membrane-spanning segments follow: residues 22-42, 97-117, 127-147, and 178-198; these read IGVL…VVFI, FFVL…SLFF, ICAW…MIFP, and ILAI…FVLG.

Belongs to the LHFP family. Interacts with GABA(A) receptor subunits. Identified in a complex of 720 kDa composed of LHFPL4, NLGN2, GABRA1, GABRB2, GABRG2 and GABRB3. Interacts with GABRB3. Interacts with GABRA2. Interacts with GABRG2. Interacts with GABRA1. Interacts with NLGN2; leading to mutual regulation of protein level and synaptic clustering.

The protein localises to the cell projection. It localises to the dendrite. Its subcellular location is the postsynaptic cell membrane. Plays a role in the regulation of inhibitory synapse formation and function by being involved in maintening gamma-aminobutyric acid receptors (GABAARs) clustering and their associated scaffold proteins at inhibitory synaptic sites. Acts in concert with NLGN2 to recruit or stabilize GABAARs. This is LHFPL tetraspan subfamily member 4 protein from Homo sapiens (Human).